A 150-amino-acid chain; its full sequence is Protein SprT-like (150 aa).

The SprT-like domain occupies 6–147 (LQKLTEDISE…CGKCRGKIKR (142 aa)). H67 serves as a coordination point for Zn(2+). The active site involves E68. H71 provides a ligand contact to Zn(2+).

Belongs to the SprT family. The cofactor is Zn(2+).

The protein localises to the cytoplasm. In Bacillus subtilis (strain 168), this protein is Protein SprT-like (ydcK).